Here is an 89-residue protein sequence, read N- to C-terminus: Small ribosomal subunit protein bS20 (89 aa).

This sequence belongs to the bacterial ribosomal protein bS20 family.

In terms of biological role, binds directly to 16S ribosomal RNA. This chain is Small ribosomal subunit protein bS20, found in Wolbachia pipientis wMel.